The chain runs to 204 residues: Probable carboxysome shell protein CsoS1E (204 aa).

3 stretches are compositionally biased toward low complexity: residues 1–14 (MPKP…DSPS), 41–84 (SAST…AAGS), and 92–102 (GGAIKPPASSS). A disordered region spans residues 1 to 102 (MPKPSSSSSS…GAIKPPASSS (102 aa)). In terms of domain architecture, BMC spans 111–196 (ALGMIETRGM…PHQEVEPALR (86 aa)).

The protein belongs to the bacterial microcompartments protein family. In terms of assembly, homohexamer.

Its subcellular location is the carboxysome. Functionally, a probable carboxysomal shell protein found only in Prochlorococcus and Synechococcus strains that grow in low light. The sequence is that of Probable carboxysome shell protein CsoS1E from Prochlorococcus marinus (strain MIT 9313).